The sequence spans 1549 residues: Ferredoxin-dependent glutamate synthase (1549 aa).

The For GATase activity role is filled by Cys37. A Glutamine amidotransferase type-2 domain is found at 37–435 (CGVGFIAHLD…PGEMIVLDLQ (399 aa)). 1116–1173 (LHEVHCLLVENNLREKVILRVDGGLRTGQDVVMAALLGADEYGFGTIAMIAGGCIMAR) serves as a coordination point for FMN. [3Fe-4S] cluster-binding residues include Cys1169, Cys1175, and Cys1180.

It belongs to the glutamate synthase family. Monomer. [3Fe-4S] cluster is required as a cofactor. FAD serves as cofactor. It depends on FMN as a cofactor.

The protein localises to the plastid. The protein resides in the chloroplast stroma. It catalyses the reaction 2 oxidized [2Fe-2S]-[ferredoxin] + 2 L-glutamate = L-glutamine + 2 reduced [2Fe-2S]-[ferredoxin] + 2-oxoglutarate + 2 H(+). It participates in amino-acid biosynthesis; L-glutamate biosynthesis via GLT pathway; L-glutamate from 2-oxoglutarate and L-glutamine (ferredoxin route): step 1/1. The protein operates within energy metabolism; nitrogen metabolism. The chain is Ferredoxin-dependent glutamate synthase (gltB) from Cyanidium caldarium (Red alga).